The sequence spans 83 residues: U25-theraphotoxin-Cg1a (83 aa).

A signal peptide spans 1 to 23; sequence MRFHTLLFLSFLLLVSCALICTA. The propeptide occupies 24–48; the sequence is QHPGLEKSGMFHENVGKGQHIEEKR. 3 disulfide bridges follow: cysteine 50–cysteine 66, cysteine 57–cysteine 71, and cysteine 65–cysteine 81.

It belongs to the neurotoxin 07 (Beta/delta-agtx) family. 03 (aga-4) subfamily. JZTX sub-subfamily. As to expression, expressed by the venom gland.

It localises to the secreted. Functionally, inhibits TTX-sensitive sodium currents in rat dorsal root ganglion (DRG) neurons. The protein is U25-theraphotoxin-Cg1a of Chilobrachys guangxiensis (Chinese earth tiger tarantula).